Here is a 423-residue protein sequence, read N- to C-terminus: Phytoene synthase, chloroplastic (423 aa).

A chloroplast-targeting transit peptide spans 1 to 136 (MVVAILRVVS…DAYDRCGEVC (136 aa)).

This sequence belongs to the phytoene/squalene synthase family. In terms of assembly, monomer.

Its subcellular location is the plastid. The protein resides in the chloroplast. It carries out the reaction 2 (2E,6E,10E)-geranylgeranyl diphosphate = 15-cis-phytoene + 2 diphosphate. Its pathway is carotenoid biosynthesis; phytoene biosynthesis; all-trans-phytoene from geranylgeranyl diphosphate: step 1/1. Its function is as follows. Catalyzes the reaction from prephytoene diphosphate to phytoene. The chain is Phytoene synthase, chloroplastic (PSY) from Narcissus pseudonarcissus (Daffodil).